Reading from the N-terminus, the 537-residue chain is Methionine--tRNA ligase (537 aa).

The short motif at 11–21 is the 'HIGH' region element; it reads AYPNAAPHIGH. The 'KMSKS' region motif lies at 301-305; that stretch reads KMSKS. An ATP-binding site is contributed by Lys304. A disordered region spans residues 503 to 537; that stretch reads PPPTGVFPRYQPSEIEGADPVKSSSKRREHNKRRE. Basic residues predominate over residues 526–537; it reads SSKRREHNKRRE.

This sequence belongs to the class-I aminoacyl-tRNA synthetase family. MetG type 2B subfamily. Monomer.

Its subcellular location is the cytoplasm. It catalyses the reaction tRNA(Met) + L-methionine + ATP = L-methionyl-tRNA(Met) + AMP + diphosphate. Is required not only for elongation of protein synthesis but also for the initiation of all mRNA translation through initiator tRNA(fMet) aminoacylation. The sequence is that of Methionine--tRNA ligase from Mycobacterium leprae (strain TN).